The following is a 752-amino-acid chain: Sialidase 85-1.1 (752 aa).

The N-terminal stretch at 1–23 (MSRRVFASAVLLLIVVTMCCGGA) is a signal peptide. BNR repeat units follow at residues 274–285 (IYSKDNGSTWSL) and 319–330 (YVSRDMGTTWTE). The tract at residues 693-725 (APEPQVKIAPKPAAPAAPAGNEETARETGDGGA) is disordered. The segment covering 701–711 (APKPAAPAAPA) has biased composition (low complexity).

Belongs to the glycosyl hydrolase 33 family.

It catalyses the reaction Hydrolysis of alpha-(2-&gt;3)-, alpha-(2-&gt;6)-, alpha-(2-&gt;8)- glycosidic linkages of terminal sialic acid residues in oligosaccharides, glycoproteins, glycolipids, colominic acid and synthetic substrates.. Its function is as follows. Developmentally regulated neuraminidase implicated in parasite invasion of cells. May contribute to the pathology during T.cruzi infection by cleaving sialic acid from cells of the immune system. This is Sialidase 85-1.1 (SA85-1.1) from Trypanosoma cruzi.